The chain runs to 165 residues: Adenine phosphoribosyltransferase (165 aa).

This sequence belongs to the purine/pyrimidine phosphoribosyltransferase family. As to quaternary structure, homodimer.

It localises to the cytoplasm. It carries out the reaction AMP + diphosphate = 5-phospho-alpha-D-ribose 1-diphosphate + adenine. It participates in purine metabolism; AMP biosynthesis via salvage pathway; AMP from adenine: step 1/1. In terms of biological role, catalyzes a salvage reaction resulting in the formation of AMP, that is energically less costly than de novo synthesis. This is Adenine phosphoribosyltransferase from Bdellovibrio bacteriovorus (strain ATCC 15356 / DSM 50701 / NCIMB 9529 / HD100).